A 137-amino-acid polypeptide reads, in one-letter code: Ribosomal RNA large subunit methyltransferase H (137 aa).

Residues L56, G85, and 104-109 (LSPLTL) contribute to the S-adenosyl-L-methionine site.

This sequence belongs to the RNA methyltransferase RlmH family. As to quaternary structure, homodimer.

The protein localises to the cytoplasm. The enzyme catalyses pseudouridine(1915) in 23S rRNA + S-adenosyl-L-methionine = N(3)-methylpseudouridine(1915) in 23S rRNA + S-adenosyl-L-homocysteine + H(+). In terms of biological role, specifically methylates the pseudouridine at position 1915 (m3Psi1915) in 23S rRNA. The sequence is that of Ribosomal RNA large subunit methyltransferase H from Thermus thermophilus (strain ATCC 27634 / DSM 579 / HB8).